A 647-amino-acid chain; its full sequence is MGSTVILSSDDEDSDISESEMDEYGDKMYLNLKGGKLKVRLSPQAFICPYCPNKKKTSFQYKDLLQHASGVGNSNSDKRSAKEKASHLALVKYLQQDLADSASEAEPSSKRQKNGNPIQDCDHDEKLVYPWKGIVVNIPTTKAQDGRSAGESGSKLRDEYILRGFNPTRVRPLWNYLGHSGTAIVEFNKDWNGLHNGLLFDKAYTVDGHGKKDWLKKDGPKLGLYGWIARADDYNGNNIIGENLRKTGDLKTIAELTEEEARKQELLVQNLRQLVEEKKKDMKEIEELCSVKSEELNQLMEEKEKNQQKHYRELNAIQERTMSHIQKIVDDHEKLKRLLESERKKLEIKCNELAKREVHNGTERMKLSEDLEQNASKNSSLELAAMEQQKADEEVKKLAEDQRRQKEELHEKIIRLERQRDQKQAIELEVEQLKGQLNVMKHMASDGDAEVVKEVDIIFKDLGEKEAQLADLDKFNQTLILRERRTNDELQEAHKELVNIMKEWNTNIGVKRMGELVTKPFVDAMQQKYCQQDVEDRAVEVLQLWEHYLKDSDWHPFKRVKLENEDREVEVIDDRDEKLRELKADLGDGPYNAVTKALLEINEYNPSGRYITTELWNFKADKKATLEEGVTCLLDQWEKAKRKRGMA.

Disordered regions lie at residues 1 to 20 (MGST…SESE) and 101 to 123 (SASE…DCDH). Residues 9–20 (SDDEDSDISESE) are compositionally biased toward acidic residues. Residues 253-508 (IAELTEEEAR…NIMKEWNTNI (256 aa)) are a coiled coil.

As to quaternary structure, interacts with FMD1/IDNL1. Forms a complex with FMD1/IDNL1 and FMD2/INDL2. Can form homodimers. Interacts with MORC6.

Forms a complex with FDM1/IDNL1 and FDM2/IDNL2 that is required for RNA-directed DNA methylation (RdDM) and that functions at a downstream step of the RdDM pathway and downstream of small interfering RNA (siRNA) formation. Required for de novo DNA methylation, siRNA accumulation and siRNA-mediated maintenance methylation. Required for several post-transcriptional gene silencing pathways. Binds double-stranded RNAs (dsRNAs) with 5'-overhangs through its XS domain. Binds long non-coding RNA (lncRNA) in an AGO4-dependent manner and associates with DRM2, resulting in DNA methylation of RdDM target loci. Mediates the silencing of a subset of MORC6 target loci. This chain is Protein INVOLVED IN DE NOVO 2, found in Arabidopsis thaliana (Mouse-ear cress).